The following is a 319-amino-acid chain: MAALSISLAFSVDSLKPTQSTKFGFSSSSHRYPLLYSCKSHRSNLRFAFPPSSVSTATETGEENSKSTGNYAFLEESFRTGRFLSNDELEKLKTLEGFAYFQELESGSMWVRVMRHEEMDSTVHLLAESFGESMLLPSGYQSVLRFLIKQYLIERREVLPHAVTLVGFFRKKVDEFSDDGEEEAVMAGTVEVCLEKRGANASPPSPTPPKESPYICNMTVKEDLRRRGIGWHLLKASEELISQISPSKDVYLHCRMVDEAPFNMYKKAGYEVVKTDTVLVLLMLQRRKHLMRKKLLPLCTNPIVEMVGSDNELTSSANV.

The transit peptide at 1 to 55 (MAALSISLAFSVDSLKPTQSTKFGFSSSSHRYPLLYSCKSHRSNLRFAFPPSSVS) directs the protein to the chloroplast. One can recognise an N-acetyltransferase domain in the interval 109–297 (MWVRVMRHEE…KHLMRKKLLP (189 aa)). Residues 218-220 (MTV), 226-231 (RRGIGW), 258-260 (DEA), and Tyr-265 contribute to the acetyl-CoA site. Tyr-265 serves as the catalytic Proton donor.

The protein belongs to the acetyltransferase family. GNAT subfamily. Oligomer. Autoacetylated. In terms of tissue distribution, expressed in green tissues.

Its subcellular location is the plastid. It localises to the chloroplast. It catalyses the reaction an N-terminal L-alpha-aminoacyl-[protein] + acetyl-CoA = N-terminal N(alpha)-acetyl-L-alpha-aminoacyl-[protein] + CoA + H(+). The catalysed reaction is L-lysyl-[protein] + acetyl-CoA = N(6)-acetyl-L-lysyl-[protein] + CoA + H(+). It carries out the reaction N-terminal L-alanyl-[protein] + acetyl-CoA = N-terminal N(alpha)-acetyl-L-alanyl-[protein] + CoA + H(+). The enzyme catalyses N-terminal L-seryl-[protein] + acetyl-CoA = N-terminal N(alpha)-acetyl-L-seryl-[protein] + CoA + H(+). It catalyses the reaction N-terminal L-methionyl-[protein] + acetyl-CoA = N-terminal N(alpha)-acetyl-L-methionyl-[protein] + CoA + H(+). The catalysed reaction is N-terminal L-valyl-[protein] + acetyl-CoA = N-terminal N(alpha)-acetyl-L-valyl-[protein] + CoA + H(+). It carries out the reaction N-terminal L-threonyl-[protein] + acetyl-CoA = N-terminal N(alpha)-acetyl-L-threonyl-[protein] + CoA + H(+). Functionally, protein acetyltransferase with dual specificity triggering both N-alpha-acetylation (NTA), with a large spectrum of modified N-termini, including methionine, alanine, serine and to a lower extent threonine and valine as substrates, and epsilon-lysine acetylation (KA). The protein is GCN5-related N-acetyltransferase 5, chloroplastic of Arabidopsis thaliana (Mouse-ear cress).